The following is a 1530-amino-acid chain: Multidrug resistance-associated protein 1 (1530 aa).

At 1-33 (MALRDFCSVDGSDLFWEWNVTWNTSNPDFTKCF) the chain is on the extracellular side. N-linked (GlcNAc...) asparagine glycosylation occurs at N19. The helical transmembrane segment at 34–54 (QNTVLVWVPCSYLWVCFPFYF) threads the bilayer. The Cytoplasmic portion of the chain corresponds to 55-74 (LYLSHHDRGYIQMTHLNKAK). Residues 75–95 (TALGFLLWIVCWADLFYSFWE) traverse the membrane as a helical segment. At 96–100 (RSMGK) the chain is on the extracellular side. Residues 101–121 (LLAPVFLVSPTLLGITMLLAT) traverse the membrane as a helical segment. At 122–133 (FLIQIERRRGVQ) the chain is on the cytoplasmic side. Residues 134-154 (SSGIMLTFWLIALLCALAILR) traverse the membrane as a helical segment. Residues 155-172 (SKIMTALKEDARVDVFRD) lie on the Extracellular side of the membrane. A helical transmembrane segment spans residues 173-193 (VTFYIYFSLVLIQLVLSCFSD). Residues 194-316 (RSPLFSETIN…KERDPSLFKV (123 aa)) are Cytoplasmic-facing. The residue at position 277 (Y277) is a Phosphotyrosine. A Phosphoserine modification is found at S289. Residues 317–337 (LYKTFGPYFLMSFLFKAVHDL) traverse the membrane as a helical segment. The ABC transmembrane type-1 1 domain occupies 325 to 608 (FLMSFLFKAV…LPMVISSIVQ (284 aa)). The Extracellular portion of the chain corresponds to 338-363 (MMFAGPEILKLLINFVNDKKAPEWQG). Residues 364-384 (YFYTALLFISACLQTLVLHQY) traverse the membrane as a helical segment. At 385–440 (FHICFVSGMRIKTAVIGAVYRKALVITNAARKSSTVGEIVNLMSVDAQRFMDLATY) the chain is on the cytoplasmic side. Residues 441–461 (INMIWSAPLQVILALYLLWLN) form a helical membrane-spanning segment. Over 462–464 (LGP) the chain is Extracellular. A helical transmembrane segment spans residues 465–485 (SVLAGVAVMVLMVPLNAVMAM). Residues 486 to 547 (KTKTYQVAHM…VLKKSAYLAA (62 aa)) are Cytoplasmic-facing. K503 is modified (N6-succinyllysine). The helical transmembrane segment at 548-568 (VGTFTWVCTPFLVALSTFAVY) threads the bilayer. At 569 to 590 (VTVDENNILDAQKAFVSLALFN) the chain is on the extracellular side. Residues 591 to 611 (ILRFPLNILPMVISSIVQASV) traverse the membrane as a helical segment. Over 612-966 (SLKRLRVFLS…VKLSVYWDYM (355 aa)) the chain is Cytoplasmic. An ABC transporter 1 domain is found at 644–868 (ITVKNATFTW…DGAFAEFLRT (225 aa)). 678–685 (GQVGCGKS) is a binding site for ATP. Residues 912–939 (RQLSSSSSYSRDVSQHHTSTAELRKPGP) are disordered. S915 and S930 each carry phosphoserine. A helical membrane pass occupies residues 967–987 (KAIGLFISFLSIFLFLCNHVA). Residues 974–1255 (SFLSIFLFLC…LVRMSSEMET (282 aa)) form the ABC transmembrane type-1 2 domain. Topologically, residues 988–1024 (SLVSNYWLSLWTDDPIVNGTQEHTQVRLSVYGALGIS) are extracellular. Residue N1005 is glycosylated (N-linked (GlcNAc...) asparagine). Residues 1025 to 1045 (QGITVFGYSMAVSIGGIFASR) traverse the membrane as a helical segment. Residues 1046–1088 (RLHLDLLHNVLRSPISFFERTPSGNLVNRFSKELDTVDSMIPQ) are Cytoplasmic-facing. A helical transmembrane segment spans residues 1089 to 1109 (VIKMFMGSLFNVIGACIIILL). A1110 is a topological domain (extracellular). The chain crosses the membrane as a helical span at residues 1111–1131 (TPMAAVIIPPLGLIYFFVQRF). The Cytoplasmic segment spans residues 1132-1202 (YVASSRQLKR…VANRWLAVRL (71 aa)). The helical transmembrane segment at 1203–1223 (ECVGNCIVLFASLFAVISRHS) threads the bilayer. Topologically, residues 1224–1225 (LS) are extracellular. A helical membrane pass occupies residues 1226 to 1246 (AGLVGLSVSYSLQVTTYLNWL). Over 1247-1530 (VRMSSEMETN…YSMAKDSGLV (284 aa)) the chain is Cytoplasmic. The ABC transporter 2 domain maps to 1292–1526 (VEFRDYGLRY…RGLFYSMAKD (235 aa)). 1326 to 1333 (GRTGAGKS) lines the ATP pocket.

The protein belongs to the ABC transporter superfamily. ABCC family. Conjugate transporter (TC 3.A.1.208) subfamily. Expressed in heart, spleen, lung, kidney, skeletal muscle, mammary gland and weaker in brain and liver.

It is found in the cell membrane. The protein localises to the basolateral cell membrane. The enzyme catalyses ATP + H2O + xenobioticSide 1 = ADP + phosphate + xenobioticSide 2.. It catalyses the reaction an S-substituted glutathione(in) + ATP + H2O = an S-substituted glutathione(out) + ADP + phosphate + H(+). The catalysed reaction is sphing-4-enine 1-phosphate(in) + ATP + H2O = sphing-4-enine 1-phosphate(out) + ADP + phosphate + H(+). It carries out the reaction leukotriene C4(in) + ATP + H2O = leukotriene C4(out) + ADP + phosphate + H(+). The enzyme catalyses 17beta-estradiol 17-O-(beta-D-glucuronate)(in) + ATP + H2O = 17beta-estradiol 17-O-(beta-D-glucuronate)(out) + ADP + phosphate + H(+). It catalyses the reaction daunorubicin(in) + ATP + H2O = daunorubicin(out) + ADP + phosphate + H(+). The catalysed reaction is vincristine(in) + ATP + H2O = vincristine(out) + ADP + phosphate + H(+). It carries out the reaction 2',3'-cGAMP(in) + ATP + H2O = 2',3'-cGAMP(out) + ADP + phosphate + H(+). The enzyme catalyses S-[(2E,6E,10E)-geranylgeranyl]-L-glutathione(in) + ATP + H2O = S-[(2E,6E,10E)-geranylgeranyl]-L-glutathione(out) + ADP + phosphate + H(+). It catalyses the reaction prostaglandin A2-S-(R)-glutathione(in) + ATP + H2O = prostaglandin A2-S-(R)-glutathione(out) + ADP + phosphate + H(+). The catalysed reaction is prostaglandin A2-S-(S)-glutathione(in) + ATP + H2O = prostaglandin A2-S-(S)-glutathione(out) + ADP + phosphate + H(+). Its activity is regulated as follows. MK 571 inhibits sphingosine 1-phosphate and leukotriene C4 export. Functionally, mediates export of organic anions and drugs from the cytoplasm. Mediates ATP-dependent transport of glutathione and glutathione conjugates, leukotriene C4, estradiol-17-beta-o-glucuronide, methotrexate, antiviral drugs and other xenobiotics. Confers resistance to anticancer drugs by decreasing accumulation of drug in cells, and by mediating ATP- and GSH-dependent drug export. Hydrolyzes ATP with low efficiency. Catalyzes the export of sphingosine 1-phosphate from mast cells independently of their degranulation. Participates in inflammatory response by allowing export of leukotriene C4 from leukotriene C4-synthesizing cells. Mediates ATP-dependent, GSH-independent cyclic GMP-AMP (cGAMP) export. Thus, by limiting intracellular cGAMP concentrations negatively regulates the cGAS-STING pathway. Exports S-geranylgeranyl-glutathione (GGG) in lymphoid cells and stromal compartments of lymphoid organs. ABCC1 (via extracellular transport) with GGT5 (via GGG catabolism) establish GGG gradients within lymphoid tissues to position P2RY8-positive lymphocytes at germinal centers in lymphoid follicles and restrict their chemotactic transmigration from blood vessels to the bone marrow parenchyma. Mediates basolateral export of GSH-conjugated R- and S-prostaglandin A2 diastereomers in polarized epithelial cells. This chain is Multidrug resistance-associated protein 1, found in Bos taurus (Bovine).